The chain runs to 463 residues: Adenosylhomocysteinase (463 aa).

3 residues coordinate substrate: Thr-54, Asp-128, and Glu-189. Position 190-192 (190-192 (TTT)) interacts with NAD(+). Positions 219 and 223 each coordinate substrate. NAD(+)-binding positions include Asn-224, 253–258 (GYGDVG), Glu-276, Asn-311, 332–334 (IGH), and Asn-377.

It belongs to the adenosylhomocysteinase family. As to quaternary structure, homotetramer. NAD(+) is required as a cofactor.

The protein resides in the cytoplasm. It carries out the reaction S-adenosyl-L-homocysteine + H2O = L-homocysteine + adenosine. It participates in amino-acid biosynthesis; L-homocysteine biosynthesis; L-homocysteine from S-adenosyl-L-homocysteine: step 1/1. Its function is as follows. May play a key role in the regulation of the intracellular concentration of adenosylhomocysteine. The sequence is that of Adenosylhomocysteinase from Rhodobacter capsulatus (strain ATCC BAA-309 / NBRC 16581 / SB1003).